The sequence spans 316 residues: Transaldolase (316 aa).

The active-site Schiff-base intermediate with substrate is the lysine 127.

This sequence belongs to the transaldolase family. Type 2 subfamily.

It is found in the cytoplasm. The catalysed reaction is D-sedoheptulose 7-phosphate + D-glyceraldehyde 3-phosphate = D-erythrose 4-phosphate + beta-D-fructose 6-phosphate. Its pathway is carbohydrate degradation; pentose phosphate pathway; D-glyceraldehyde 3-phosphate and beta-D-fructose 6-phosphate from D-ribose 5-phosphate and D-xylulose 5-phosphate (non-oxidative stage): step 2/3. Functionally, transaldolase is important for the balance of metabolites in the pentose-phosphate pathway. This Helicobacter pylori (strain P12) protein is Transaldolase.